Consider the following 247-residue polypeptide: Transmembrane protein 33 (247 aa).

At Ala2 the chain carries N-acetylalanine. The Lumenal portion of the chain corresponds to 2–31 (ADTTPNGPQGAGAVQFMMTNKLDTAMWLSR). Residues 32–52 (LFTVYCSALFVLPLLGLHEAA) form a helical membrane-spanning segment. Topologically, residues 53 to 100 (SFYQRALLANALTSALRLHQRLPHFQLSRAFLAQALLEDSCHYLLYSL) are cytoplasmic. A helical transmembrane segment spans residues 101–121 (IFVNSYPVTMSIFPVLLFSLL). The Lumenal portion of the chain corresponds to 122-155 (HAATYTKKVLDAKGSNSLPLLRSVLDKLSTNQQN). Residues 156–176 (ILKFIACNEIFLMPATVFMLF) traverse the membrane as a helical segment. Residues 177–247 (SGQGSLLQPF…FISRLAPTVA (71 aa)) are Cytoplasmic-facing.

Belongs to the PER33/POM33 family. As to quaternary structure, interacts with EIF2AK3. Interacts with ARL6IP1, isoform RTN1-A of RTN1, isoform RTN2-B of RTN2, isoform 3 of RTN3 and isoform 3 of RTN4. Interacts with RNF5. Interacts with RNF26. Interacts with PKD2. As to expression, highly expressed in the liver and significantly in brain, lungs and kidneys.

The protein localises to the endoplasmic reticulum membrane. It localises to the melanosome. It is found in the nucleus envelope. Its function is as follows. Acts as a regulator of the tubular endoplasmic reticulum (ER) network by modulating intracellular calcium homeostasis. Mechanistically, stimulates PKD2 calcium-dependent activity. Suppresses the RTN3/4-induced formation of the ER tubules. Positively regulates PERK-mediated and IRE1-mediated unfolded protein response signaling. Plays an essential role in VEGF-mediated release of Ca(2+) from ER stores during angiogenesis. Also plays a role in the modulation of innate immune signaling through the cGAS-STING pathway by interacting with RNF26. Participates in lipid metabolism by acting as a downstream effector of the pyruvate kinase/PKM. Forms a complex with RNF5 to facilitate polyubiquitination and subsequent degradation of SCAP on the ER membrane. This chain is Transmembrane protein 33 (Tmem33), found in Rattus norvegicus (Rat).